The primary structure comprises 215 residues: UPF0502 protein YceH (215 aa).

Residue Lys80 is modified to N6-acetyllysine.

The protein belongs to the UPF0502 family.

In Escherichia coli O81 (strain ED1a), this protein is UPF0502 protein YceH.